Consider the following 192-residue polypeptide: Ion-translocating oxidoreductase complex subunit B (192 aa).

A hydrophobic region spans residues 1–26 (MNAIWIAVAAVSLLGLAFGAILGYAS). The region spanning 32-91 (EDDPVVEKIDEILPQSQCGQCGYPGCRPYAETISCNGEKINRCAPGGEAVMLKIAELLNV) is the 4Fe-4S domain. [4Fe-4S] cluster is bound by residues C49, C52, C57, C74, C117, C120, C123, C127, C147, C150, C153, and C157. 2 4Fe-4S ferredoxin-type domains span residues 108 to 137 (MVAV…GATR) and 138 to 167 (AMHT…LQPV).

The protein belongs to the 4Fe4S bacterial-type ferredoxin family. RnfB subfamily. In terms of assembly, the complex is composed of six subunits: RsxA, RsxB, RsxC, RsxD, RsxE and RsxG. It depends on [4Fe-4S] cluster as a cofactor.

It is found in the cell inner membrane. Functionally, part of a membrane-bound complex that couples electron transfer with translocation of ions across the membrane. Required to maintain the reduced state of SoxR. This Escherichia coli O6:K15:H31 (strain 536 / UPEC) protein is Ion-translocating oxidoreductase complex subunit B.